We begin with the raw amino-acid sequence, 201 residues long: Calcium channel flower (201 aa).

3 consecutive transmembrane segments (helical) span residues 37 to 57 (LGIV…LSII), 59 to 79 (LSVS…VVMA), and 103 to 120 (PMYF…PPIF).

The protein belongs to the calcium channel flower family. Homomultimer. Associates with the dally/ magu complex.

The protein localises to the cell membrane. Its subcellular location is the cytoplasmic vesicle. It localises to the secretory vesicle. It is found in the synaptic vesicle membrane. The protein resides in the presynaptic cell membrane. The protein localises to the endosome. With respect to regulation, channel activity is inhibited by La(3+), which reduces Ca(2+) influx and thus inhibits it's function in promoting activity-dependent bulk endocytosis (ADBE) in response to high stimuli. In terms of biological role, transmembrane protein which mediates synaptic endocytosis, fitness-based cell culling, neuronal culling, morphogen gradient scaling, and calcium transport. Regulates synaptic endocytosis and hence couples exo- with endocytosis. Controls two major modes of synaptic vesicle (SV) endocytosis in the synaptic boutons of neuromuscular junctions (NMJs); Ca(2+) channel-independent Clathrin-mediated endocytosis (CME) in response to mild stimulation, and Ca(2+) channel-dependent activity-dependent bulk endocytosis (ADBE) in response to strong stimulation. Functions in ADBE and subsequent SV reformation from bulk endosomes by initiating Ca(2+) channel-dependent phosphatidylinositol 4,5-bisphosphate (PtdIns(4,5)P2) compartmentalization in synaptic boutons. There it acts at the periactive zone to provide the low Ca(2+) levels required to initiate Calcineurin activation and upregulate PtdIns(4,5)P2. Conversely PtdIns(4,5)P2 enhances fwe Ca(2+) channel-activity, establishing a positive feedback loop that induces PtdIns(4,5)P2 microdomain at the periactive zone. These microdomains trigger bulk membrane invagination (i.e. ADBE) by triggering actin polymerization while also promoting localization of fwe to bulk endosomes, thereby removing the ADBE trigger to reduce endocytosis and prevent excess membrane uptake. PtdIns(4,5)P2 then promotes SV reformation from the bulk endosomes, to coordinate ADBE and subsequent SV reformation. Different combinations of the flower isoforms at the cell membrane are also required for the identification and elimination of suboptimal or supernumerary cells during development, regeneration, and adulthood. Required for the recognition and elimination of unfit cells in the developing wing during cell competition. In the developing pupal retina, mediates the elimination of unwanted postmitotic neurons, including supernumerary photoreceptor neurons that form at the periphery of the retina and are contained within incomplete ommatidia units. Also required for efficient elimination and replacement of old neurons by newly generated neurons during regeneration in the adult brain following mechanical injury. Downstream of the flower fitness fingerprints, cells identified as unwanted or unfit are eliminated via apoptosis through the expression of ahuizotl (azot). However, the cells marked for elimination by the flower isoforms only undergo apoptosis if additional thresholds are met; (1) their neighboring fit/healthy cells express different levels of the fwe isoforms, and (2) the levels of the protective signal SPARC expressed by the loser or unwanted cells are unable to inhibit caspase activation. These additional thresholds for flower-mediated apoptosis, allows useful cells to recover from transient and limited stress before they are unnecessarily eliminated. Functions with dally and magu in a mechanism of scaling, which utilises apoptosis to ensure that the dpp morphogen gradient, which mediates organ growth, remains proportional to the size of the growing wing. In this mechanism, fwe represses dally- and Magu-dependent activity in expanding the gradient, and dally/Magu inhibits fwe-dependent apoptosis to keep cell death rate low. When the levels of these different proteins are optimally regulated the gradient correctly scales with organ growth but when this fails, fwe-mediated apoptosis is activated to trim the developing tissue to match the correct size of the gradient. The sequence is that of Calcium channel flower from Drosophila willistoni (Fruit fly).